Reading from the N-terminus, the 274-residue chain is Large ribosomal subunit protein uL2 (274 aa).

The segment at 223 to 274 (VAMNPVDHPHGGGEGRTSGGRHPVTPWGVPTKGYKTRSNKRTDKYIVRRRNK) is disordered.

The protein belongs to the universal ribosomal protein uL2 family. In terms of assembly, part of the 50S ribosomal subunit. Forms a bridge to the 30S subunit in the 70S ribosome.

In terms of biological role, one of the primary rRNA binding proteins. Required for association of the 30S and 50S subunits to form the 70S ribosome, for tRNA binding and peptide bond formation. It has been suggested to have peptidyltransferase activity; this is somewhat controversial. Makes several contacts with the 16S rRNA in the 70S ribosome. The chain is Large ribosomal subunit protein uL2 from Shewanella baltica (strain OS223).